The sequence spans 246 residues: Probable transcriptional regulatory protein YebC (246 aa).

The tract at residues 1 to 20 (MAGHSKWANTRHRKAAQDAK) is disordered.

Belongs to the TACO1 family.

The protein localises to the cytoplasm. The sequence is that of Probable transcriptional regulatory protein YebC from Escherichia coli O6:K15:H31 (strain 536 / UPEC).